We begin with the raw amino-acid sequence, 152 residues long: Homeobox protein ceh-63 (152 aa).

Residues 21–30 are compositionally biased toward polar residues; sequence NDTNSSQQIK. 2 disordered regions span residues 21–48 and 92–126; these read NDTNSSQQIKNIKPPPKRSNRPTKRTTF and RRTKKRRCTSPLRKSMMKKSDERSPSPQNPSSQHV. Residues 35–44 show a composition bias toward basic residues; sequence PPKRSNRPTK. The segment at residues 41–100 is a DNA-binding region (homeobox); sequence RPTKRTTFTSEQVTLLELEFAKNEYICKDRRGELAQTIELTECQVKTWFQNRRTKKRRCT. The segment covering 116-126 has biased composition (polar residues); it reads PSPQNPSSQHV.

In terms of assembly, may interact with homeobox protein ceh-14.

The protein resides in the nucleus. Functionally, probable transcription factor, modulating expression of helix-loop-helix protein mbr-1, perhaps acting in concert with homeobox protein ceh-14. May play a minor role in axon guidance in the DVC interneuron. The sequence is that of Homeobox protein ceh-63 from Caenorhabditis elegans.